The sequence spans 803 residues: Translation initiation factor IF-2 (803 aa).

Disordered regions lie at residues 95-125 (PVVE…EKAE) and 138-178 (EVKE…EREE). The segment covering 111–121 (VPLTSDTTNLN) has biased composition (polar residues). Basic and acidic residues predominate over residues 138 to 155 (EVKEEAKKTPSEKKETPK). The segment covering 156–167 (KGPRKETRRSRK) has biased composition (basic residues). The segment covering 168-178 (PDKEDKWEREE) has biased composition (basic and acidic residues). Positions 302–471 (PRAPVVTIMG…LLQAEVLELK (170 aa)) constitute a tr-type G domain. The tract at residues 311 to 318 (GHVDHGKT) is G1. Residue 311 to 318 (GHVDHGKT) participates in GTP binding. The tract at residues 336-340 (GITQH) is G2. The G3 stretch occupies residues 357–360 (DTPG). Residues 357-361 (DTPGH) and 411-414 (NKID) each bind GTP. A G4 region spans residues 411-414 (NKID). The segment at 447-449 (SAK) is G5.

This sequence belongs to the TRAFAC class translation factor GTPase superfamily. Classic translation factor GTPase family. IF-2 subfamily.

It localises to the cytoplasm. One of the essential components for the initiation of protein synthesis. Protects formylmethionyl-tRNA from spontaneous hydrolysis and promotes its binding to the 30S ribosomal subunits. Also involved in the hydrolysis of GTP during the formation of the 70S ribosomal complex. The chain is Translation initiation factor IF-2 from Coxiella burnetii (strain CbuK_Q154) (Coxiella burnetii (strain Q154)).